The sequence spans 83 residues: Cytochrome b559 subunit alpha (83 aa).

The helical transmembrane segment at 21–35 (VIHSITIPSLFIAGW) threads the bilayer. H23 provides a ligand contact to heme.

It belongs to the PsbE/PsbF family. In terms of assembly, heterodimer of an alpha subunit and a beta subunit. PSII is composed of 1 copy each of membrane proteins PsbA, PsbB, PsbC, PsbD, PsbE, PsbF, PsbH, PsbI, PsbJ, PsbK, PsbL, PsbM, PsbT, PsbX, PsbY, PsbZ, Psb30/Ycf12, at least 3 peripheral proteins of the oxygen-evolving complex and a large number of cofactors. It forms dimeric complexes. The cofactor is heme b.

The protein localises to the plastid. It is found in the chloroplast thylakoid membrane. This b-type cytochrome is tightly associated with the reaction center of photosystem II (PSII). PSII is a light-driven water:plastoquinone oxidoreductase that uses light energy to abstract electrons from H(2)O, generating O(2) and a proton gradient subsequently used for ATP formation. It consists of a core antenna complex that captures photons, and an electron transfer chain that converts photonic excitation into a charge separation. The chain is Cytochrome b559 subunit alpha from Marchantia polymorpha (Common liverwort).